We begin with the raw amino-acid sequence, 259 residues long: Probable ABC transporter permease protein RC0129 (259 aa).

5 helical membrane passes run 13-35 (TVKFAQSVGSFSLFSFAAVSSII), 49-69 (LFIGFHSLPVVAMTTFFSGAV), 148-168 (VITAIITMPCLVLIGDIIGVM), 195-215 (PIDVISGLVKAGVFGFIISII), and 237-257 (AVVNSSILILISNYLITELFF).

This sequence belongs to the MlaE permease family.

The protein resides in the cell inner membrane. In terms of biological role, could be part of an ABC transporter complex. The chain is Probable ABC transporter permease protein RC0129 from Rickettsia conorii (strain ATCC VR-613 / Malish 7).